A 486-amino-acid chain; its full sequence is ATP synthase subunit beta (486 aa).

An ATP-binding site is contributed by 164–171 (GGAGVGKT).

It belongs to the ATPase alpha/beta chains family. F-type ATPases have 2 components, CF(1) - the catalytic core - and CF(0) - the membrane proton channel. CF(1) has five subunits: alpha(3), beta(3), gamma(1), delta(1), epsilon(1). CF(0) has four main subunits: a(1), b(1), b'(1) and c(9-12).

It is found in the cellular thylakoid membrane. It catalyses the reaction ATP + H2O + 4 H(+)(in) = ADP + phosphate + 5 H(+)(out). Its function is as follows. Produces ATP from ADP in the presence of a proton gradient across the membrane. The catalytic sites are hosted primarily by the beta subunits. The chain is ATP synthase subunit beta from Prochlorococcus marinus (strain MIT 9515).